The following is a 1122-amino-acid chain: Receptor-type guanylate cyclase gcy-5 (1122 aa).

The first 19 residues, 1–19 (MRLLYFSMVLLWVLGASEC), serve as a signal peptide directing secretion. Topologically, residues 20–486 (QVIPSSRRTL…CPVQFWDQYG (467 aa)) are extracellular. 7 N-linked (GlcNAc...) asparagine glycosylation sites follow: N252, N299, N344, N350, N378, N434, and N439. The helical transmembrane segment at 487-507 (VLIFVASIVLIFLICIMLMCF) threads the bilayer. The Cytoplasmic segment spans residues 508 to 1122 (GFMIRGRRAE…KSKMDTLKVV (615 aa)). The segment at 536–562 (QKEKRKPNSRRSLQSGPSTITGESKMT) is disordered. A Protein kinase domain is found at 542–830 (PNSRRSLQSG…NTNLMDHVFN (289 aa)). Polar residues predominate over residues 545–559 (RRSLQSGPSTITGES). In terms of domain architecture, Guanylate cyclase spans 888–1018 (TVLFSDVVKF…DTVNTASRME (131 aa)). Positions 1071-1122 (SDTKSLSTRTTPPITDENWPPQMKEDLKKRAVTPYPERQRSGKSKMDTLKVV) are disordered. A compositionally biased stretch (polar residues) spans 1074–1083 (KSLSTRTTPP). Basic and acidic residues predominate over residues 1107-1122 (ERQRSGKSKMDTLKVV).

The protein belongs to the adenylyl cyclase class-4/guanylyl cyclase family. In terms of tissue distribution, expressed in both ASEL and ASER neurons during early embryonic stages and becomes specifically expressed in ASER neuron in early larval stage.

The protein resides in the cell membrane. The catalysed reaction is GTP = 3',5'-cyclic GMP + diphosphate. Guanylate cyclase involved in the production of the second messenger cGMP. Unlike other guanylate cyclases expressed in ASE neurons, may not play a role in chemotaxis responses to salt ions mediated by ASE sensory neurons. In Caenorhabditis elegans, this protein is Receptor-type guanylate cyclase gcy-5.